Consider the following 430-residue polypeptide: Adenylosuccinate synthetase (430 aa).

Residues 12 to 18 (GDEGKGK) and 40 to 42 (GHT) each bind GTP. Residue D13 is the Proton acceptor of the active site. Mg(2+)-binding residues include D13 and G40. Residues 13-16 (DEGK), 38-41 (NAGH), T128, R142, Q223, T238, and R302 contribute to the IMP site. The Proton donor role is filled by H41. Residue 298–304 (TTTGRPR) coordinates substrate. Residues R304, 330–332 (SID), and 412–414 (SVG) each bind GTP.

This sequence belongs to the adenylosuccinate synthetase family. Homodimer. Requires Mg(2+) as cofactor.

Its subcellular location is the cytoplasm. The catalysed reaction is IMP + L-aspartate + GTP = N(6)-(1,2-dicarboxyethyl)-AMP + GDP + phosphate + 2 H(+). It functions in the pathway purine metabolism; AMP biosynthesis via de novo pathway; AMP from IMP: step 1/2. Its function is as follows. Plays an important role in the de novo pathway of purine nucleotide biosynthesis. Catalyzes the first committed step in the biosynthesis of AMP from IMP. The sequence is that of Adenylosuccinate synthetase from Streptococcus pyogenes serotype M49 (strain NZ131).